A 164-amino-acid chain; its full sequence is Peptide deformylase (164 aa).

Positions 87 and 129 each coordinate Fe cation. The active site involves Glu130. His133 contacts Fe cation.

It belongs to the polypeptide deformylase family. Fe(2+) is required as a cofactor.

The enzyme catalyses N-terminal N-formyl-L-methionyl-[peptide] + H2O = N-terminal L-methionyl-[peptide] + formate. Removes the formyl group from the N-terminal Met of newly synthesized proteins. Requires at least a dipeptide for an efficient rate of reaction. N-terminal L-methionine is a prerequisite for activity but the enzyme has broad specificity at other positions. This is Peptide deformylase from Thermotoga sp. (strain RQ2).